The sequence spans 124 residues: Fluoride-specific ion channel FluC 2 (124 aa).

The next 4 membrane-spanning stretches (helical) occupy residues 9–29, 34–54, 67–87, and 99–119; these read LGIFLAAMLGGLVRYLVSTWL, DFPWGTLFVNYLGIFCLIFLV, LILALGTGFCGGLTTFSSLML, and FSLVLYLLLSIGGGLLLAYFL. Na(+)-binding residues include Gly-77 and Thr-80.

It belongs to the fluoride channel Fluc/FEX (TC 1.A.43) family.

The protein resides in the cell membrane. The catalysed reaction is fluoride(in) = fluoride(out). With respect to regulation, na(+) is not transported, but it plays an essential structural role and its presence is essential for fluoride channel function. Fluoride-specific ion channel. Important for reducing fluoride concentration in the cell, thus reducing its toxicity. The sequence is that of Fluoride-specific ion channel FluC 2 from Streptococcus pneumoniae (strain ATCC BAA-255 / R6).